The sequence spans 24 residues: Glutathione S-transferase (24 aa).

Belongs to the GST superfamily. As to quaternary structure, monomer and homodimer.

It is found in the cytoplasm. The enzyme catalyses RX + glutathione = an S-substituted glutathione + a halide anion + H(+). Conjugation of reduced glutathione to a wide number of exogenous and endogenous hydrophobic electrophiles. The polypeptide is Glutathione S-transferase (Pseudomonas sp. (strain CF600)).